Reading from the N-terminus, the 223-residue chain is Putative synaptogyrin-2 like protein (223 aa).

The residue at position 1 (Met-1) is an N-acetylmethionine. Ser-3 carries the phosphoserine modification. One can recognise an MARVEL domain in the interval 20–170 (FLTQPQVVAR…LASLTYQRYK (151 aa)). A run of 4 helical transmembrane segments spans residues 26–46 (VVARALCLVFALIVFSCIYGE), 71–91 (GSAIGVLAFLASAFLVVDAYF), 104–124 (VIGDLLFSALWTFLWFVGFCF), and 146–166 (AAITFSFFSIFSWGVLASLTY). A disordered region spans residues 197–223 (ASVDNYQQPPFTQNAETTEGYQPPPVY). The segment covering 200–216 (DNYQQPPFTQNAETTEG) has biased composition (polar residues).

It belongs to the synaptogyrin family.

Its subcellular location is the membrane. The chain is Putative synaptogyrin-2 like protein from Homo sapiens (Human).